The chain runs to 496 residues: Membrane-bound lytic murein transglycosylase F (496 aa).

The first 31 residues, M1–C31, serve as a signal peptide directing secretion. Residues D32–V271 are non-LT domain. Residues N273 to R496 form an LT domain region. The active site involves E316. Residues H464 to I486 are disordered.

In the N-terminal section; belongs to the bacterial solute-binding protein 3 family. It in the C-terminal section; belongs to the transglycosylase Slt family.

The protein localises to the cell outer membrane. The catalysed reaction is Exolytic cleavage of the (1-&gt;4)-beta-glycosidic linkage between N-acetylmuramic acid (MurNAc) and N-acetylglucosamine (GlcNAc) residues in peptidoglycan, from either the reducing or the non-reducing ends of the peptidoglycan chains, with concomitant formation of a 1,6-anhydrobond in the MurNAc residue.. Functionally, murein-degrading enzyme that degrades murein glycan strands and insoluble, high-molecular weight murein sacculi, with the concomitant formation of a 1,6-anhydromuramoyl product. Lytic transglycosylases (LTs) play an integral role in the metabolism of the peptidoglycan (PG) sacculus. Their lytic action creates space within the PG sacculus to allow for its expansion as well as for the insertion of various structures such as secretion systems and flagella. This chain is Membrane-bound lytic murein transglycosylase F, found in Aeromonas hydrophila subsp. hydrophila (strain ATCC 7966 / DSM 30187 / BCRC 13018 / CCUG 14551 / JCM 1027 / KCTC 2358 / NCIMB 9240 / NCTC 8049).